A 315-amino-acid polypeptide reads, in one-letter code: Probable cell division protein WhiA (315 aa).

The segment at residues S277–Q311 is a DNA-binding region (H-T-H motif).

It belongs to the WhiA family.

Its function is as follows. Involved in cell division and chromosome segregation. This chain is Probable cell division protein WhiA, found in Lacticaseibacillus casei (strain BL23) (Lactobacillus casei).